A 199-amino-acid chain; its full sequence is Large ribosomal subunit protein mL51 (199 aa).

The transit peptide at 1 to 15 (MNSASISRLTSVIRT) directs the protein to the mitochondrion.

The protein belongs to the mitochondrion-specific ribosomal protein mL51 family. As to quaternary structure, component of the mitochondrial ribosome large subunit (39S) which comprises a 16S rRNA and about 50 distinct proteins.

The protein resides in the mitochondrion. The chain is Large ribosomal subunit protein mL51 (mrpl-51) from Caenorhabditis briggsae.